Consider the following 481-residue polypeptide: NADH-quinone oxidoreductase subunit N (481 aa).

13 consecutive transmembrane segments (helical) span residues 14-34, 38-57, 76-96, 108-128, 162-182, 204-224, 235-255, 272-292, 297-317, 323-343, 369-389, 403-423, and 449-469; these read LILS…GDGF, IGWG…TGPA, FAKL…PGFF, PVLI…GDLL, FVLG…LYGF, MFGM…VPFH, PTPV…ALLL, IVVF…IGQT, LLAY…AAGS, ATMT…ICVL, LAAA…LFGF, GFWP…FYYL, and GLIT…IPLL.

The protein belongs to the complex I subunit 2 family. NDH-1 is composed of 14 different subunits. Subunits NuoA, H, J, K, L, M, N constitute the membrane sector of the complex.

It is found in the cell inner membrane. The catalysed reaction is a quinone + NADH + 5 H(+)(in) = a quinol + NAD(+) + 4 H(+)(out). Functionally, NDH-1 shuttles electrons from NADH, via FMN and iron-sulfur (Fe-S) centers, to quinones in the respiratory chain. The immediate electron acceptor for the enzyme in this species is believed to be ubiquinone. Couples the redox reaction to proton translocation (for every two electrons transferred, four hydrogen ions are translocated across the cytoplasmic membrane), and thus conserves the redox energy in a proton gradient. The sequence is that of NADH-quinone oxidoreductase subunit N from Rhizorhabdus wittichii (strain DSM 6014 / CCUG 31198 / JCM 15750 / NBRC 105917 / EY 4224 / RW1) (Sphingomonas wittichii).